Reading from the N-terminus, the 218-residue chain is Large ribosomal subunit protein bL25 (218 aa).

Belongs to the bacterial ribosomal protein bL25 family. CTC subfamily. As to quaternary structure, part of the 50S ribosomal subunit; part of the 5S rRNA/L5/L18/L25 subcomplex. Contacts the 5S rRNA. Binds to the 5S rRNA independently of L5 and L18.

In terms of biological role, this is one of the proteins that binds to the 5S RNA in the ribosome where it forms part of the central protuberance. The chain is Large ribosomal subunit protein bL25 from Gluconobacter oxydans (strain 621H) (Gluconobacter suboxydans).